The following is a 580-amino-acid chain: External alternative NAD(P)H-ubiquinone oxidoreductase B3, mitochondrial (580 aa).

Residues 1–38 constitute a mitochondrion transit peptide; sequence MRPFAYFERLSQAFHDYPSLSKILVVSTISGGGLIVYS. 57-87 serves as a coordination point for FAD; it reads KVVLLGTGWAGASFLKTLNNSSYEVQVISPR. 221–257 is an NAD(+) binding site; sequence LHFVVVGGGPTGVEFASELHDFVNEDLVKLYPKAKNL. Residues 377-412 enclose the EF-hand domain; the sequence is KVMEDIAAIFKKADKENSGTLTMKEFHEVMSDICDR. 4 residues coordinate Ca(2+): Asp-390, Ser-394, Thr-396, and Glu-401. Residues 571 to 580 carry the Microbody targeting signal motif; it reads FIFGRDSSRI.

It belongs to the NADH dehydrogenase family. FAD is required as a cofactor. As to expression, expressed at low levels in seedlings, roots, stems, buds and flowers and, to a lower extent, in leaves and cotyledons.

The protein resides in the mitochondrion inner membrane. It is found in the peroxisome. The catalysed reaction is a quinone + NADH + H(+) = a quinol + NAD(+). It carries out the reaction a ubiquinone + NADH + H(+) = a ubiquinol + NAD(+). Alternative NADH-ubiquinone oxidoreductase which catalyzes the oxidation of mitochondrial NADH does not translocate protons across the inner mitochondrial membrane. The sequence is that of External alternative NAD(P)H-ubiquinone oxidoreductase B3, mitochondrial (NDB3) from Arabidopsis thaliana (Mouse-ear cress).